We begin with the raw amino-acid sequence, 456 residues long: Endoglucanase A (456 aa).

The N-terminal stretch at 1-30 is a signal peptide; that stretch reads MSRIRRFLATALAAATAGVGAIVTAIASAG. Positions 31–322 are catalytic; it reads PAHAYDSPFY…RAYELAMNAA (292 aa). Asp113 is an active-site residue. Disulfide bonds link Cys114–Cys159 and Cys267–Cys302. Catalysis depends on Asp151, which acts as the Proton donor. The disordered stretch occupies residues 255 to 280; sequence SRNGNGPLGSEWCDPPGRATGTWSTT. Asp300 acts as the Nucleophile in catalysis. Residues 321–358 are disordered; it reads AAPPTYSPSPTPSTPSPSPSQSDPGSPSPSPSQPPAGR. Residues 323-355 form a linker ('hinge') (Pro-Ser box) region; that stretch reads PPTYSPSPTPSTPSPSPSQSDPGSPSPSPSQPP. Positions 325-338 are enriched in pro residues; the sequence is TYSPSPTPSTPSPS. The CBM2 domain occupies 353-456; the sequence is QPPAGRACEA…LSSSITCSAS (104 aa). Residues Cys360 and Cys453 are joined by a disulfide bond.

Belongs to the glycosyl hydrolase 6 (cellulase B) family.

It catalyses the reaction Endohydrolysis of (1-&gt;4)-beta-D-glucosidic linkages in cellulose, lichenin and cereal beta-D-glucans.. This chain is Endoglucanase A (celA), found in Thermobispora bispora (Microbispora bispora).